The sequence spans 558 residues: Arginine--tRNA ligase (558 aa).

The 'HIGH' region motif lies at 119–129 (ANPDGPLHVGH).

It belongs to the class-I aminoacyl-tRNA synthetase family.

It is found in the cytoplasm. It catalyses the reaction tRNA(Arg) + L-arginine + ATP = L-arginyl-tRNA(Arg) + AMP + diphosphate. This Methanothrix thermoacetophila (strain DSM 6194 / JCM 14653 / NBRC 101360 / PT) (Methanosaeta thermophila) protein is Arginine--tRNA ligase.